A 47-amino-acid chain; its full sequence is Ruminococcin-A (47 aa).

The N-terminal stretch at 1-23 (MRNDVLTLTNPMEENELEQILGG) is a signal peptide. A 2,3-didehydrobutyrine mark is found at Thr-30 and Thr-39. A cross-link (beta-methyllanthionine (Thr-Cys)) is located at residues 30–35 (TISHEC). A cross-link (lanthionine (Ser-Cys)) is located at residues 32-46 (SHECNMNTWQFLFTC). Positions 45 to 47 (TCC) form a cross-link, beta-methyllanthionine (Thr-Cys).

This sequence belongs to the type A lantibiotic family. Post-translationally, maturation of lantibiotics involves the enzymatic conversion of Thr, and Ser into dehydrated AA and the formation of thioether bonds with cysteine. This is followed by membrane translocation and cleavage of the modified precursor.

The protein localises to the secreted. Its function is as follows. Lanthionine-containing peptide antibiotic (lantibiotic) active on Gram-positive bacteria. The bactericidal activity of lantibiotics is based on depolarization of energized bacterial cytoplasmic membranes, initiated by the formation of aqueous transmembrane pores. Ruminococcin A is a broad spectrum bacteriocin exhibiting activity against a wide range of pathogenic clostridia and B.longum. This Blautia hansenii (Ruminococcus hansenii) protein is Ruminococcin-A (rumA1).